The chain runs to 444 residues: Glutamyl-tRNA reductase (444 aa).

Residues 49 to 52 (TCNR), Ser109, 114 to 116 (ETQ), and Gln120 each bind substrate. Cys50 (nucleophile) is an active-site residue. 189–194 (GAGKMG) contributes to the NADP(+) binding site.

Belongs to the glutamyl-tRNA reductase family. Homodimer.

It catalyses the reaction (S)-4-amino-5-oxopentanoate + tRNA(Glu) + NADP(+) = L-glutamyl-tRNA(Glu) + NADPH + H(+). It functions in the pathway porphyrin-containing compound metabolism; protoporphyrin-IX biosynthesis; 5-aminolevulinate from L-glutamyl-tRNA(Glu): step 1/2. Catalyzes the NADPH-dependent reduction of glutamyl-tRNA(Glu) to glutamate 1-semialdehyde (GSA). The sequence is that of Glutamyl-tRNA reductase from Bacillus anthracis (strain A0248).